The chain runs to 946 residues: DNA primase (946 aa).

Residues 596–626 are disordered; it reads RDTEEDEDGKENKNNVPDNGVFQKTTSSVDT. Positions 617 to 626 are enriched in polar residues; the sequence is FQKTTSSVDT. A CHC2-type zinc finger spans residues 881–920; it reads CLNYTHRNPQETVQVFIDLRTEHSYALWASLWSRCFTKKC.

The protein belongs to the herpesviridae DNA primase family. As to quaternary structure, associates with the helicase and the primase-associated factor to form the helicase-primase factor. Interacts with host SNAPIN.

The protein localises to the host nucleus. Functionally, essential component of the helicase/primase complex. Unwinds the DNA at the replication forks and generates single-stranded DNA for both leading and lagging strand synthesis. The primase initiates primer synthesis and thereby produces large amount of short RNA primers on the lagging strand that the polymerase elongates using dNTPs. The polypeptide is DNA primase (UL70) (Homo sapiens (Human)).